Here is a 164-residue protein sequence, read N- to C-terminus: NADH-quinone oxidoreductase subunit I (164 aa).

4Fe-4S ferredoxin-type domains follow at residues 55 to 85 (LRRY…IDAE) and 95 to 124 (TRYD…EGPN). Positions 65, 68, 71, 75, 104, 107, 110, and 114 each coordinate [4Fe-4S] cluster.

The protein belongs to the complex I 23 kDa subunit family. In terms of assembly, NDH-1 is composed of 14 different subunits. Subunits NuoA, H, J, K, L, M, N constitute the membrane sector of the complex. [4Fe-4S] cluster serves as cofactor.

It is found in the cell inner membrane. The enzyme catalyses a quinone + NADH + 5 H(+)(in) = a quinol + NAD(+) + 4 H(+)(out). NDH-1 shuttles electrons from NADH, via FMN and iron-sulfur (Fe-S) centers, to quinones in the respiratory chain. The immediate electron acceptor for the enzyme in this species is believed to be ubiquinone. Couples the redox reaction to proton translocation (for every two electrons transferred, four hydrogen ions are translocated across the cytoplasmic membrane), and thus conserves the redox energy in a proton gradient. The sequence is that of NADH-quinone oxidoreductase subunit I from Ruegeria sp. (strain TM1040) (Silicibacter sp.).